We begin with the raw amino-acid sequence, 578 residues long: Isocitrate dehydrogenase kinase/phosphatase (578 aa).

ATP contacts are provided by residues Ala-315–Met-321 and Lys-336. The active site involves Asp-371.

The protein belongs to the AceK family.

The protein localises to the cytoplasm. It carries out the reaction L-seryl-[isocitrate dehydrogenase] + ATP = O-phospho-L-seryl-[isocitrate dehydrogenase] + ADP + H(+). Functionally, bifunctional enzyme which can phosphorylate or dephosphorylate isocitrate dehydrogenase (IDH) on a specific serine residue. This is a regulatory mechanism which enables bacteria to bypass the Krebs cycle via the glyoxylate shunt in response to the source of carbon. When bacteria are grown on glucose, IDH is fully active and unphosphorylated, but when grown on acetate or ethanol, the activity of IDH declines drastically concomitant with its phosphorylation. This Escherichia coli (strain K12 / MC4100 / BW2952) protein is Isocitrate dehydrogenase kinase/phosphatase.